The sequence spans 170 residues: RNA polymerase sigma factor TcsR (170 aa).

The sigma-70 factor domain-4 stretch occupies residues Ile-122–Lys-169. Positions Glu-143–Leu-162 form a DNA-binding region, H-T-H motif.

Belongs to the sigma-70 factor family.

In terms of biological role, sigma factors are initiation factors that promote the attachment of RNA polymerase to specific initiation sites and are then released. Transcriptional regulator specifically required to activate expression of the toxin gene locus, composed of tcsL and tcdE/utxA. In Paraclostridium sordellii (strain ATCC 9714 / DSM 2141 / JCM 3814 / LMG 15708 / NCIMB 10717 / 211) (Clostridium sordellii), this protein is RNA polymerase sigma factor TcsR.